Reading from the N-terminus, the 455-residue chain is 1-deoxy-D-xylulose 5-phosphate reductoisomerase (455 aa).

Positions 30, 31, 32, 33, 63, and 159 each coordinate NADPH. Position 160 (lysine 160) interacts with 1-deoxy-D-xylulose 5-phosphate. An NADPH-binding site is contributed by glutamate 161. A Mn(2+)-binding site is contributed by aspartate 185. 1-deoxy-D-xylulose 5-phosphate contacts are provided by serine 186 and glutamate 187. Glutamate 187 is a binding site for Mn(2+). The span at 205–214 (YATAKQSIQP) shows a compositional bias: polar residues. The interval 205–233 (YATAKQSIQPESVRATDPPSSTTDSPAKT) is disordered. 1-deoxy-D-xylulose 5-phosphate-binding residues include serine 246 and histidine 269. NADPH is bound at residue glycine 275. 1-deoxy-D-xylulose 5-phosphate contacts are provided by serine 282, asparagine 287, lysine 288, and glutamate 291. Glutamate 291 provides a ligand contact to Mn(2+).

It belongs to the DXR family. Mg(2+) is required as a cofactor. It depends on Mn(2+) as a cofactor.

It catalyses the reaction 2-C-methyl-D-erythritol 4-phosphate + NADP(+) = 1-deoxy-D-xylulose 5-phosphate + NADPH + H(+). The protein operates within isoprenoid biosynthesis; isopentenyl diphosphate biosynthesis via DXP pathway; isopentenyl diphosphate from 1-deoxy-D-xylulose 5-phosphate: step 1/6. Functionally, catalyzes the NADPH-dependent rearrangement and reduction of 1-deoxy-D-xylulose-5-phosphate (DXP) to 2-C-methyl-D-erythritol 4-phosphate (MEP). In Rhodopirellula baltica (strain DSM 10527 / NCIMB 13988 / SH1), this protein is 1-deoxy-D-xylulose 5-phosphate reductoisomerase.